The chain runs to 479 residues: Lincomycin resistance protein LmrB (479 aa).

14 helical membrane passes run 19-41 (MISL…IALT), 56-78 (WLTT…LLQW), 85-107 (FTVS…SFSF), 112-134 (RIVQ…LVIF), 141-160 (AAMG…GPTF), 170-192 (WHWI…IAYM), 205-222 (VLSI…VFGF), 232-251 (WSSP…LILF), 272-294 (MFIL…MLLL), 304-326 (LTAF…MSPV), 338-355 (WLVI…WFFS), 360-382 (TSTA…MIMM), 403-425 (IMNT…IMAA), and 449-471 (AGVQ…GAFF).

This sequence belongs to the major facilitator superfamily. EmrB family.

The protein localises to the cell membrane. Its function is as follows. Proton-dependent transporter. May mediate the efflux of lincomycin. This chain is Lincomycin resistance protein LmrB (lmrB), found in Bacillus subtilis (strain 168).